The chain runs to 263 residues: Endonuclease 8 (263 aa).

P2 functions as the Schiff-base intermediate with DNA in the catalytic mechanism. The active-site Proton donor is E3. K53 (proton donor; for beta-elimination activity) is an active-site residue. Q70, R125, and N169 together coordinate DNA. An FPG-type zinc finger spans residues 229 to 263 (KVFHRDGEACERCGGIIEKTTLSSRPFYWCPHCQK). Residue R253 is the Proton donor; for delta-elimination activity of the active site.

The protein belongs to the FPG family. Requires Zn(2+) as cofactor.

The catalysed reaction is 2'-deoxyribonucleotide-(2'-deoxyribose 5'-phosphate)-2'-deoxyribonucleotide-DNA = a 3'-end 2'-deoxyribonucleotide-(2,3-dehydro-2,3-deoxyribose 5'-phosphate)-DNA + a 5'-end 5'-phospho-2'-deoxyribonucleoside-DNA + H(+). Functionally, involved in base excision repair of DNA damaged by oxidation or by mutagenic agents. Acts as a DNA glycosylase that recognizes and removes damaged bases. Has a preference for oxidized pyrimidines, such as thymine glycol, 5,6-dihydrouracil and 5,6-dihydrothymine. Has AP (apurinic/apyrimidinic) lyase activity and introduces nicks in the DNA strand. Cleaves the DNA backbone by beta-delta elimination to generate a single-strand break at the site of the removed base with both 3'- and 5'-phosphates. This is Endonuclease 8 from Salmonella agona (strain SL483).